Reading from the N-terminus, the 95-residue chain is ATP-dependent Clp protease adapter protein ClpS (95 aa).

The protein belongs to the ClpS family. Binds to the N-terminal domain of the chaperone ClpA.

Involved in the modulation of the specificity of the ClpAP-mediated ATP-dependent protein degradation. The protein is ATP-dependent Clp protease adapter protein ClpS of Synechococcus elongatus (strain ATCC 33912 / PCC 7942 / FACHB-805) (Anacystis nidulans R2).